The primary structure comprises 428 residues: Glutamate-1-semialdehyde 2,1-aminomutase (428 aa).

Lysine 267 is modified (N6-(pyridoxal phosphate)lysine).

The protein belongs to the class-III pyridoxal-phosphate-dependent aminotransferase family. HemL subfamily. In terms of assembly, homodimer. Requires pyridoxal 5'-phosphate as cofactor.

It is found in the cytoplasm. It carries out the reaction (S)-4-amino-5-oxopentanoate = 5-aminolevulinate. It participates in porphyrin-containing compound metabolism; protoporphyrin-IX biosynthesis; 5-aminolevulinate from L-glutamyl-tRNA(Glu): step 2/2. The sequence is that of Glutamate-1-semialdehyde 2,1-aminomutase from Pelobacter propionicus (strain DSM 2379 / NBRC 103807 / OttBd1).